A 285-amino-acid chain; its full sequence is Protein phosphatase 1 regulatory subunit 3B (285 aa).

Positions 62 to 65 (RVSF) match the PP1-binding motif motif. One can recognise a CBM21 domain in the interval 125–233 (RNRLQADHVC…SNRGKNYRII (109 aa)). Position 261 is a phosphoserine (Ser261).

As to quaternary structure, interacts with glycogen, PPP1CC catalytic subunit of PP1 and PYGL. Associates with glycogen particles. Forms complexes with debranching enzyme, glycogen phosphorylase, glycogen synthase and phosphorylase kinase which is necessary for its regulation of PP1 activity. Highly expressed in the liver and, at lower levels, in skeletal muscle, including in vastus lateralis, gastrocnemius and soleus (at protein level). Highest mRNA levels are observed in skeletal muscle, and only moderate levels in liver and heart. Weak expression in placenta and lung.

In terms of biological role, acts as a glycogen-targeting subunit for phosphatase PP1. Facilitates interaction of the PP1 with enzymes of the glycogen metabolism and regulates its activity. Suppresses the rate at which PP1 dephosphorylates (inactivates) glycogen phosphorylase and enhances the rate at which it activates glycogen synthase and therefore limits glycogen breakdown. Its activity is inhibited by PYGL, resulting in inhibition of the glycogen synthase and glycogen phosphorylase phosphatase activities of PP1. Dramatically increases basal and insulin-stimulated glycogen synthesis upon overexpression in hepatocytes. The protein is Protein phosphatase 1 regulatory subunit 3B (PPP1R3B) of Homo sapiens (Human).